The chain runs to 430 residues: Isochorismate synthase MenF (430 aa).

The active-site Proton acceptor is the Lys-187. The active-site Proton donor is the Glu-237. Mg(2+) contacts are provided by Glu-281 and Glu-414.

Belongs to the isochorismate synthase family. Mg(2+) is required as a cofactor.

It catalyses the reaction chorismate = isochorismate. Its pathway is quinol/quinone metabolism; 1,4-dihydroxy-2-naphthoate biosynthesis; 1,4-dihydroxy-2-naphthoate from chorismate: step 1/7. It participates in quinol/quinone metabolism; menaquinone biosynthesis. In terms of biological role, catalyzes the conversion of chorismate to isochorismate. This is Isochorismate synthase MenF from Haemophilus influenzae (strain ATCC 51907 / DSM 11121 / KW20 / Rd).